The following is a 149-amino-acid chain: MGLEKSLILFPLFVLLLGWVQPSLGKESSAQKFERQHMDSSGSSNNSPTYCNQMMKSRSMTKESCKPVNTFVHEPLEDVQAICSQENVTCKNGNRNCYKSSSALHITDCHLKGNSKYPNCNYNTNQYQKHIIVACDGNPYVPVHLDATV.

The first 25 residues, 1-25 (MGLEKSLILFPLFVLLLGWVQPSLG), serve as a signal peptide directing secretion. The tract at residues 30–49 (AQKFERQHMDSSGSSNNSPT) is disordered. Residues lysine 32 and arginine 35 each contribute to the substrate site. Histidine 37 acts as the Proton acceptor in catalysis. Over residues 39–49 (DSSGSSNNSPT) the composition is skewed to polar residues. 4 disulfides stabilise this stretch: cysteine 51-cysteine 109, cysteine 65-cysteine 120, cysteine 83-cysteine 135, and cysteine 90-cysteine 97. 66 to 70 (KPVNT) is a binding site for substrate. The N-linked (GlcNAc...) asparagine glycan is linked to asparagine 87. Lysine 91 provides a ligand contact to substrate. The active-site Proton donor is histidine 144.

This sequence belongs to the pancreatic ribonuclease family. As to quaternary structure, monomer. Interacts with and forms tight 1:1 complexes with RNH1. Dimerization of two such complexes may occur. Interaction with RNH1 inhibits this protein. In terms of tissue distribution, pancreas.

The protein resides in the secreted. It catalyses the reaction an [RNA] containing cytidine + H2O = an [RNA]-3'-cytidine-3'-phosphate + a 5'-hydroxy-ribonucleotide-3'-[RNA].. The enzyme catalyses an [RNA] containing uridine + H2O = an [RNA]-3'-uridine-3'-phosphate + a 5'-hydroxy-ribonucleotide-3'-[RNA].. In terms of biological role, endonuclease that catalyzes the cleavage of RNA on the 3' side of pyrimidine nucleotides. Acts on single-stranded and double-stranded RNA. This chain is Ribonuclease pancreatic (Rnase1), found in Mus pahari (Gairdner's shrew-mouse).